The following is a 314-amino-acid chain: Ribosomal protein uL3 glutamine methyltransferase (314 aa).

This sequence belongs to the protein N5-glutamine methyltransferase family. PrmB subfamily.

It carries out the reaction L-glutaminyl-[ribosomal protein uL3] + S-adenosyl-L-methionine = N(5)-methyl-L-glutaminyl-[ribosomal protein uL3] + S-adenosyl-L-homocysteine + H(+). In terms of biological role, methylates large ribosomal subunit protein uL3 on a specific glutamine residue. This Shewanella oneidensis (strain ATCC 700550 / JCM 31522 / CIP 106686 / LMG 19005 / NCIMB 14063 / MR-1) protein is Ribosomal protein uL3 glutamine methyltransferase.